Consider the following 713-residue polypeptide: MPNYTVPPDPADTSWDSPYSIPVQIVVWIIIIVLSLETIIGNAMVVMAYRIERNISKQVSNRYIVSLAISDLIIGIEGFPFFTVYVLNGDRWPLGWVACQTWLFLDYTLCLVSILTVLLITADRYLSVCHTAKYLKWQSPTKTQLLIVMSWLLPAIIFGIMIYGWQAMTGQSTSMSGAECSAPFLSNPYVNMGMYVAYYWTTLVAMLILYKGIHQAAKNLEKKAKAKERRHIALILSQRLGTQVGVSLMLQSKAEKEKAEEAQKDSGYTSNQAGDANNLRRFGFSEPETSQFRVDPNSNNNLNVEGSLNTENDQNLGVIEEERSGFLSRRESNESYYPGPHPTAANSRRCSEMEKVSLLSESDGVPSTRPAKSYGRLSLRSRYSASESITTTHENDEKEVEKADSLQKLFADDELGSVLNFKEEKLKNTDSNNDSDTTSVILQRSRKYKKNKRPRSSRRSEHSTPRQIAKVKQAEGTAAQLIEESVPDDDQTETIEVKRTDRWVVSMKKRIARALIRRRSTTRPERGSSSNSDDSSSEVEGEEKPEVRNNGLKIPQLTVNNENRGETSSQPGRDRLAPPNKTDTFLSASGVSRKISTISTVITREKVISSIFAPIAVFNRGRKQTKAEKRAHKAFRTITFIVGFFAILWSPYYIMATVYGFCKGECIPSFLYTLSYYMCYLNSSGNPFAYALANRQFRSAFMRMFRGNFNKVA.

Over 1–20 the chain is Extracellular; the sequence is MPNYTVPPDPADTSWDSPYS. The N-linked (GlcNAc...) asparagine glycan is linked to N3. The helical transmembrane segment at 21–41 threads the bilayer; that stretch reads IPVQIVVWIIIIVLSLETIIG. Over 42 to 66 the chain is Cytoplasmic; sequence NAMVVMAYRIERNISKQVSNRYIVS. The chain crosses the membrane as a helical span at residues 67 to 87; sequence LAISDLIIGIEGFPFFTVYVL. The Extracellular segment spans residues 88–101; the sequence is NGDRWPLGWVACQT. C99 and C180 are oxidised to a cystine. The chain crosses the membrane as a helical span at residues 102–122; sequence WLFLDYTLCLVSILTVLLITA. Residues 123 to 144 lie on the Cytoplasmic side of the membrane; the sequence is DRYLSVCHTAKYLKWQSPTKTQ. Residues 145–165 form a helical membrane-spanning segment; it reads LLIVMSWLLPAIIFGIMIYGW. The Extracellular portion of the chain corresponds to 166 to 189; that stretch reads QAMTGQSTSMSGAECSAPFLSNPY. The helical transmembrane segment at 190-210 threads the bilayer; that stretch reads VNMGMYVAYYWTTLVAMLILY. Over 211-633 the chain is Cytoplasmic; sequence KGIHQAAKNL…QTKAEKRAHK (423 aa). 4 disordered regions span residues 256–350, 381–403, 427–475, and 515–585; these read KEKA…SRRC, SRYSASESITTTHENDEKEVEKA, KNTD…KQAE, and LIRR…TDTF. Polar residues-rich tracts occupy residues 266-275 and 287-315; these read SGYTSNQAGD and PETSQFRVDPNSNNNLNVEGSLNTENDQN. Composition is skewed to basic and acidic residues over residues 320–333 and 393–403; these read EEERSGFLSRRESN and HENDEKEVEKA. Positions 429–439 are enriched in low complexity; that stretch reads TDSNNDSDTTS. The segment covering 444 to 457 has biased composition (basic residues); that stretch reads RSRKYKKNKRPRSS. The segment covering 557 to 571 has biased composition (polar residues); it reads LTVNNENRGETSSQP. Residues 634–656 form a helical membrane-spanning segment; it reads AFRTITFIVGFFAILWSPYYIMA. Topologically, residues 657 to 670 are extracellular; that stretch reads TVYGFCKGECIPSF. A helical transmembrane segment spans residues 671-693; that stretch reads LYTLSYYMCYLNSSGNPFAYALA. At 694–713 the chain is on the cytoplasmic side; it reads NRQFRSAFMRMFRGNFNKVA.

This sequence belongs to the G-protein coupled receptor 1 family. Muscarinic acetylcholine receptor subfamily. Expressed in head region of the larva. In adults, expression is seen in the periventricularis magnocellularis (PVM) neuron.

Its subcellular location is the cell membrane. The muscarinic acetylcholine receptor mediates various cellular responses, including inhibition of adenylate cyclase, breakdown of phosphoinositides and modulation of potassium channels through the action of G proteins. Primary transducing effect is Pi turnover. The sequence is that of Probable muscarinic acetylcholine receptor gar-1 (gar-1) from Caenorhabditis elegans.